A 317-amino-acid chain; its full sequence is Methionyl-tRNA formyltransferase (317 aa).

Residue 109-112 (SLLP) participates in (6S)-5,6,7,8-tetrahydrofolate binding.

The protein belongs to the Fmt family.

It carries out the reaction L-methionyl-tRNA(fMet) + (6R)-10-formyltetrahydrofolate = N-formyl-L-methionyl-tRNA(fMet) + (6S)-5,6,7,8-tetrahydrofolate + H(+). Attaches a formyl group to the free amino group of methionyl-tRNA(fMet). The formyl group appears to play a dual role in the initiator identity of N-formylmethionyl-tRNA by promoting its recognition by IF2 and preventing the misappropriation of this tRNA by the elongation apparatus. The chain is Methionyl-tRNA formyltransferase from Halalkalibacterium halodurans (strain ATCC BAA-125 / DSM 18197 / FERM 7344 / JCM 9153 / C-125) (Bacillus halodurans).